Reading from the N-terminus, the 219-residue chain is Proteasome subunit beta type-9 (219 aa).

Positions 1–20 (MLRTGAPNGDLPRAGEVHTG) are cleaved as a propeptide — removed in mature form. The Nucleophile role is filled by threonine 21. Lysine 53 and lysine 109 each carry N6-acetyllysine.

It belongs to the peptidase T1B family. The 26S proteasome consists of a 20S proteasome core and two 19S regulatory subunits. The 20S proteasome core is composed of 28 subunits that are arranged in four stacked rings, resulting in a barrel-shaped structure. The two end rings are each formed by seven alpha subunits, and the two central rings are each formed by seven beta subunits. The catalytic chamber with the active sites is on the inside of the barrel. Component of the immunoproteasome, where it displaces the equivalent housekeeping subunit PSMB6. Component of the spermatoproteasome, a form of the proteasome specifically found in testis. Autocleaved. The resulting N-terminal Thr residue of the mature subunit is responsible for the nucleophile proteolytic activity.

The protein localises to the cytoplasm. Its subcellular location is the nucleus. It catalyses the reaction Cleavage of peptide bonds with very broad specificity.. In terms of biological role, the proteasome is a multicatalytic proteinase complex which is characterized by its ability to cleave peptides with Arg, Phe, Tyr, Leu, and Glu adjacent to the leaving group at neutral or slightly basic pH. The proteasome has an ATP-dependent proteolytic activity. This subunit is involved in antigen processing to generate class I binding peptides. The sequence is that of Proteasome subunit beta type-9 (PSMB9) from Bos taurus (Bovine).